The chain runs to 380 residues: Glycogenin-2 (380 aa).

Residues leucine 10, tyrosine 16, and arginine 95 each contribute to the UDP site. UDP-alpha-D-glucose-binding residues include leucine 10, tyrosine 16, arginine 95, lysine 104, aspartate 120, alanine 121, aspartate 122, asparagine 158, threonine 159, aspartate 185, aspartate 188, and glutamine 189. UDP-binding residues include aspartate 120, alanine 121, and aspartate 122. Residue aspartate 120 coordinates Mn(2+). Aspartate 122 is a binding site for Mn(2+). O-linked (Glc...) tyrosine glycans are attached at residues tyrosine 230 and tyrosine 232. Residues histidine 249, glycine 252, and lysine 255 each contribute to the UDP site. Histidine 249 contributes to the Mn(2+) binding site. UDP-alpha-D-glucose contacts are provided by glycine 252 and lysine 255. The disordered stretch occupies residues 331–357; sequence SVDRNASQKSTAEKHDIEKPTSKPQSA. The segment covering 341-351 has biased composition (basic and acidic residues); it reads TAEKHDIEKPT. O-linked (Glc...) tyrosine glycosylation is present at tyrosine 367.

It belongs to the glycosyltransferase 8 family. Glycogenin subfamily. Interacts with glycogen synthase GSY2. Mn(2+) is required as a cofactor.

It is found in the cytoplasm. The protein localises to the vacuole. It carries out the reaction L-tyrosyl-[glycogenin] + UDP-alpha-D-glucose = alpha-D-glucosyl-L-tyrosyl-[glycogenin] + UDP + H(+). The enzyme catalyses [1,4-alpha-D-glucosyl](n)-L-tyrosyl-[glycogenin] + UDP-alpha-D-glucose = [1,4-alpha-D-glucosyl](n+1)-L-tyrosyl-[glycogenin] + UDP + H(+). Self-glucosylating initiator of glycogen synthesis. It catalyzes the formation of a short alpha (1,4)-glucosyl chain covalently attached via a glucose 1-O-tyrosyl linkage to internal tyrosine residues and these chains act as primers for the elongation reaction catalyzed by glycogen synthase. Capable of transferring glucosyl residues to unbound acceptors such as free oligoglucans or oligoglucan derivatives. The sequence is that of Glycogenin-2 (GLG2) from Saccharomyces cerevisiae (strain YJM789) (Baker's yeast).